We begin with the raw amino-acid sequence, 87 residues long: Retinal rod rhodopsin-sensitive cGMP 3',5'-cyclic phosphodiesterase subunit gamma (87 aa).

M1 bears the N-acetylmethionine mark. Residues 16-54 are disordered; that stretch reads VVGGPVTPRKGPPKFKQRQTRQFKSKPPKKGVQGFGDDI. The segment covering 26–44 has biased composition (basic residues); that stretch reads GPPKFKQRQTRQFKSKPPK.

The protein belongs to the rod/cone cGMP-PDE gamma subunit family. As to quaternary structure, oligomer composed of two catalytic chains (alpha and beta), an inhibitory chain (gamma) and the delta chain.

It catalyses the reaction 3',5'-cyclic GMP + H2O = GMP + H(+). Its function is as follows. Participates in processes of transmission and amplification of the visual signal. cGMP-PDEs are the effector molecules in G-protein-mediated phototransduction in vertebrate rods and cones. The sequence is that of Retinal rod rhodopsin-sensitive cGMP 3',5'-cyclic phosphodiesterase subunit gamma (PDE6G) from Cavia porcellus (Guinea pig).